The chain runs to 364 residues: Peptide chain release factor 1 (364 aa).

Residue Gln230 is modified to N5-methylglutamine.

The protein belongs to the prokaryotic/mitochondrial release factor family. Post-translationally, methylated by PrmC. Methylation increases the termination efficiency of RF1.

Its subcellular location is the cytoplasm. Its function is as follows. Peptide chain release factor 1 directs the termination of translation in response to the peptide chain termination codons UAG and UAA. The sequence is that of Peptide chain release factor 1 from Acidothermus cellulolyticus (strain ATCC 43068 / DSM 8971 / 11B).